The following is a 64-amino-acid chain: Large ribosomal subunit protein bL32 (64 aa).

The segment at 1 to 28 (MAVQKSRVTPSRRGQRRSHDALTAKKLS) is disordered.

The protein belongs to the bacterial ribosomal protein bL32 family.

This Xylella fastidiosa (strain 9a5c) protein is Large ribosomal subunit protein bL32 (rpmF).